Reading from the N-terminus, the 357-residue chain is CD4+ T-cell-stimulating antigen (357 aa).

The signal sequence occupies residues 1–22; it reads MKKRTFALALSMIIASGVVLGA. Cys-23 carries the N-palmitoyl cysteine lipid modification. Cys-23 carries the S-diacylglycerol cysteine lipid modification.

This sequence belongs to the BMP lipoprotein family.

The protein resides in the cell membrane. The sequence is that of CD4+ T-cell-stimulating antigen (tcsA) from Listeria innocua serovar 6a (strain ATCC BAA-680 / CLIP 11262).